We begin with the raw amino-acid sequence, 197 residues long: Adenylyl-sulfate kinase (197 aa).

33 to 40 contributes to the ATP binding site; that stretch reads GLSGSGKS. Residue serine 107 is the Phosphoserine intermediate of the active site.

The protein belongs to the APS kinase family.

The enzyme catalyses adenosine 5'-phosphosulfate + ATP = 3'-phosphoadenylyl sulfate + ADP + H(+). Its pathway is sulfur metabolism; hydrogen sulfide biosynthesis; sulfite from sulfate: step 2/3. Functionally, catalyzes the synthesis of activated sulfate. This Bacillus velezensis (strain DSM 23117 / BGSC 10A6 / LMG 26770 / FZB42) (Bacillus amyloliquefaciens subsp. plantarum) protein is Adenylyl-sulfate kinase.